A 591-amino-acid polypeptide reads, in one-letter code: Aspartate--tRNA(Asp/Asn) ligase (591 aa).

Residue Glu-175 participates in L-aspartate binding. The segment at 199 to 202 (QQYK) is aspartate. The L-aspartate site is built by Arg-221 and His-450. Residue 221 to 223 (RDE) participates in ATP binding. An ATP-binding site is contributed by Glu-484. Arg-491 contributes to the L-aspartate binding site. 536–539 (GVDR) is a binding site for ATP.

Belongs to the class-II aminoacyl-tRNA synthetase family. Type 1 subfamily. As to quaternary structure, homodimer.

Its subcellular location is the cytoplasm. It carries out the reaction tRNA(Asx) + L-aspartate + ATP = L-aspartyl-tRNA(Asx) + AMP + diphosphate. In terms of biological role, aspartyl-tRNA synthetase with relaxed tRNA specificity since it is able to aspartylate not only its cognate tRNA(Asp) but also tRNA(Asn). Reaction proceeds in two steps: L-aspartate is first activated by ATP to form Asp-AMP and then transferred to the acceptor end of tRNA(Asp/Asn). The polypeptide is Aspartate--tRNA(Asp/Asn) ligase (Rhodopseudomonas palustris (strain ATCC BAA-98 / CGA009)).